The chain runs to 770 residues: Molybdenum cofactor sulfurase (770 aa).

Lys-231 bears the N6-(pyridoxal phosphate)lysine mark. Residue Cys-395 is part of the active site. An MOSC domain is found at 601 to 770 (DWVSRALGVS…TVSGVIEESE (170 aa)).

The protein belongs to the class-V pyridoxal-phosphate-dependent aminotransferase family. MOCOS subfamily. The cofactor is pyridoxal 5'-phosphate.

The catalysed reaction is Mo-molybdopterin + L-cysteine + AH2 = thio-Mo-molybdopterin + L-alanine + A + H2O. Functionally, sulfurates the molybdenum cofactor. Sulfation of molybdenum is essential for xanthine dehydrogenase (XDH) and aldehyde oxidase (ADO) enzymes in which molybdenum cofactor is liganded by 1 oxygen and 1 sulfur atom in active form. This Anopheles gambiae (African malaria mosquito) protein is Molybdenum cofactor sulfurase.